A 30-amino-acid chain; its full sequence is Kalata-B5 (30 aa).

A cross-link (cyclopeptide (Gly-Asn)) is located at residues 1–30 (GTPCGESCVYIPCISGVIGCSCTDKVCYLN). Disulfide bonds link Cys-4–Cys-20, Cys-8–Cys-22, and Cys-13–Cys-27.

In terms of processing, this is a cyclic peptide.

Probably participates in a plant defense mechanism. The polypeptide is Kalata-B5 (Oldenlandia affinis).